The primary structure comprises 69 residues: Sec-independent protein translocase protein TatA (69 aa).

The chain crosses the membrane as a helical span at residues 1 to 21; sequence MMPGPFELIIILVIVLLLFGG.

It belongs to the TatA/E family. As to quaternary structure, the Tat system comprises two distinct complexes: a TatABC complex, containing multiple copies of TatA, TatB and TatC subunits, and a separate TatA complex, containing only TatA subunits. Substrates initially bind to the TatABC complex, which probably triggers association of the separate TatA complex to form the active translocon.

The protein localises to the cell inner membrane. Functionally, part of the twin-arginine translocation (Tat) system that transports large folded proteins containing a characteristic twin-arginine motif in their signal peptide across membranes. TatA could form the protein-conducting channel of the Tat system. This is Sec-independent protein translocase protein TatA from Vesicomyosocius okutanii subsp. Calyptogena okutanii (strain HA).